Here is a 369-residue protein sequence, read N- to C-terminus: Core histone macro-H2A.1 (369 aa).

2 positions are modified to N6-lactoyllysine; alternate: Lys7 and Lys9. Residues 15 to 90 (RSAKAGVIFP…ILLAVANDEE (76 aa)) form the Histone H2A domain. Lys18 is modified (N6-methyllysine). The residue at position 116 (Lys116) is an N6-acetyllysine; alternate. Residue Lys116 forms a Glycyl lysine isopeptide (Lys-Gly) (interchain with G-Cter in ubiquitin); alternate linkage. Lys117 is covalently cross-linked (Glycyl lysine isopeptide (Lys-Gly) (interchain with G-Cter in ubiquitin)). Lys123 carries the post-translational modification N6-acetyllysine; alternate. Lys123 carries the post-translational modification N6,N6-dimethyllysine; alternate. Lys123 participates in a covalent cross-link: Glycyl lysine isopeptide (Lys-Gly) (interchain with G-Cter in SUMO2); alternate. The segment at 128-180 (ITPPPAKKAKSPSQKKTVSKKTGGKKGARKSKKKQGEVSKSASADSTTEGTPA) is disordered. Residue Thr129 is modified to Phosphothreonine. Basic residues predominate over residues 144-160 (TVSKKTGGKKGARKSKK). Over residues 165 to 177 (VSKSASADSTTEG) the composition is skewed to polar residues. Residue Lys167 forms a Glycyl lysine isopeptide (Lys-Gly) (interchain with G-Cter in SUMO2) linkage. 2 positions are modified to phosphoserine: Ser170 and Ser173. Thr178 is modified (phosphothreonine). A Macro domain is found at 184 to 367 (TVLSTKSLFL…IYVQEMAKLD (184 aa)). Residue Lys189 forms a Glycyl lysine isopeptide (Lys-Gly) (interchain with G-Cter in SUMO2) linkage. Positions 203, 204, 226, 275, 312, 313, 314, and 316 each coordinate a glycoprotein. Lys320 participates in a covalent cross-link: Glycyl lysine isopeptide (Lys-Gly) (interchain with G-Cter in SUMO2).

Belongs to the histone H2A family. In terms of assembly, the nucleosome is a histone octamer containing two molecules each of H2A, H2B, H3 and H4 assembled in one H3-H4 heterotetramer and two H2A-H2B heterodimers. Post-translationally, ADP-ribosylated. In terms of processing, monoubiquitinated at either Lys-116 or Lys-117. May also be polyubiquitinated. Ubiquitination is mediated by the CUL3/SPOP E3 complex and does not promote proteasomal degradation. Instead, it is required for enrichment in inactive X chromosome chromatin. Present in liver (at protein level).

Its subcellular location is the nucleus. It localises to the chromosome. Its function is as follows. Variant histone H2A which replaces conventional H2A in a subset of nucleosomes where it represses transcription. Nucleosomes wrap and compact DNA into chromatin, limiting DNA accessibility to the cellular machineries which require DNA as a template. Histones thereby play a central role in transcription regulation, DNA repair, DNA replication and chromosomal stability. DNA accessibility is regulated via a complex set of post-translational modifications of histones, also called histone code, and nucleosome remodeling. In terms of biological role, isoform that specifically binds poly-ADP-ribose and O-acetyl-ADP-ribose and plays a key role in NAD(+) metabolism. Able to bind to the ends of poly-ADP-ribose chains created by PARP1 and cap them. This prevents PARP1 from further addition of ADP-ribose and thus limits the consumption of nuclear NAD(+), allowing the cell to maintain proper NAD(+) levels in both the nucleus and the mitochondria to promote proper mitochondrial respiration. In contrast to isoform 1, does not bind poly-ADP-ribose. The chain is Core histone macro-H2A.1 from Gallus gallus (Chicken).